Here is a 248-residue protein sequence, read N- to C-terminus: Protein maestro (248 aa).

Positions 1–23 (MEQTRKIPNQPLPTPTSQSKKRR) are disordered. Residues 128–163 (SFFIDITLQARTLLDDEDDSVRYSAFVLFGQLASFA) form an HEAT repeat.

Prominent expression seen in testis, brain, liver and heart. Weakly expressed in the kidney.

The protein localises to the nucleus. Its subcellular location is the nucleolus. In Mus musculus (Mouse), this protein is Protein maestro (Mro).